We begin with the raw amino-acid sequence, 387 residues long: MAAAALLWLPLLVGCLAGPGGTEAQQTTLYPLVGRVFVHTLEPASFLHLPEHAAPATIPVTYHAHLQGHPDLPRWLRYTQRSPHHPGFLYGAATPEDRGRQVIEVTAYNRDSFDTAGQSLVLLIRDPEGSPLPYQTEFLVRSHDVEEVLPPTPASHFLTALAGLWEPGELKLLNITSALDRGGRVPLPIGGQKEGVYIKVGSASPFSTCLKMVASPDSHARCARGQPPLLSCYDTLAPHFRVDWCNVSLVDTSVPEPVDEVPTPGDGILEHDPFFCPPTEATARDFLADALVTLLVPLLVALLLALLLAYIMCCRREGRLKRDLATSDIQMVHHCTIHENTEELRQMAASREVPRPLFPLPMFNVRTGERMPPRVDSAQVPLILDQH.

Residues 1-24 (MAAAALLWLPLLVGCLAGPGGTEA) form the signal peptide. The Extracellular segment spans residues 25–290 (QQTTLYPLVG…ATARDFLADA (266 aa)). N-linked (GlcNAc...) asparagine glycans are attached at residues asparagine 174 and asparagine 246. A helical membrane pass occupies residues 291-311 (LVTLLVPLLVALLLALLLAYI). Over 312–387 (MCCRREGRLK…AQVPLILDQH (76 aa)) the chain is Cytoplasmic. Serine 377 bears the Phosphoserine mark.

This sequence belongs to the sarcoglycan alpha/epsilon family. In terms of assembly, cross-link to form 2 major subcomplexes: one consisting of SGCB, SGCD and SGCG and the other consisting of SGCB and SGCD. The association between SGCB and SGCG is particularly strong while SGCA is loosely associated with the other sarcoglycans. Interacts with the syntrophin SNTA1.

The protein localises to the cell membrane. It localises to the sarcolemma. The protein resides in the cytoplasm. It is found in the cytoskeleton. Its function is as follows. Component of the sarcoglycan complex, a subcomplex of the dystrophin-glycoprotein complex which forms a link between the F-actin cytoskeleton and the extracellular matrix. The sequence is that of Alpha-sarcoglycan (SGCA) from Oryctolagus cuniculus (Rabbit).